The chain runs to 140 residues: Small ribosomal subunit protein uS12m (140 aa).

This sequence belongs to the universal ribosomal protein uS12 family.

The protein resides in the mitochondrion. This is Small ribosomal subunit protein uS12m (mrps12) from Dictyostelium discoideum (Social amoeba).